A 448-amino-acid polypeptide reads, in one-letter code: U-box domain-containing protein 30 (448 aa).

Positions 63 to 137 (DIPSVFICPI…YTWFSQKYVL (75 aa)) constitute a U-box domain. ARM repeat units lie at residues 179-219 (LMAR…SLDL) and 221-260 (SDSKSGLMQPAKVSLIVDMLNDGSNETKINCARLIRGLVE).

It catalyses the reaction S-ubiquitinyl-[E2 ubiquitin-conjugating enzyme]-L-cysteine + [acceptor protein]-L-lysine = [E2 ubiquitin-conjugating enzyme]-L-cysteine + N(6)-ubiquitinyl-[acceptor protein]-L-lysine.. Its pathway is protein modification; protein ubiquitination. Its function is as follows. Functions as an E3 ubiquitin ligase. The sequence is that of U-box domain-containing protein 30 (PUB30) from Arabidopsis thaliana (Mouse-ear cress).